Reading from the N-terminus, the 504-residue chain is Cytochrome P450 6a9 (504 aa).

C449 lines the heme pocket.

Belongs to the cytochrome P450 family. Heme is required as a cofactor.

It is found in the endoplasmic reticulum membrane. It localises to the microsome membrane. In terms of biological role, involved in the metabolism of insect hormones and in the breakdown of synthetic insecticides. The protein is Cytochrome P450 6a9 (Cyp6a9) of Drosophila melanogaster (Fruit fly).